The sequence spans 164 residues: Pyruvoyl-dependent arginine decarboxylase (164 aa).

Serine 52 carries the post-translational modification Pyruvic acid (Ser).

It belongs to the PdaD family. It depends on pyruvate as a cofactor.

It carries out the reaction L-arginine + H(+) = agmatine + CO2. This is Pyruvoyl-dependent arginine decarboxylase from Methanococcus maripaludis (strain C5 / ATCC BAA-1333).